Reading from the N-terminus, the 257-residue chain is Pimeloyl-[acyl-carrier protein] methyl ester esterase (257 aa).

Residues leucine 16–proline 242 enclose the AB hydrolase-1 domain. Substrate-binding positions include tryptophan 22, serine 82 to leucine 83, and phenylalanine 143 to glutamine 147. Serine 82 functions as the Nucleophile in the catalytic mechanism. Residues aspartate 207 and histidine 235 contribute to the active site. Substrate is bound at residue histidine 235.

The protein belongs to the AB hydrolase superfamily. Carboxylesterase BioH family. Monomer.

It localises to the cytoplasm. It catalyses the reaction 6-carboxyhexanoyl-[ACP] methyl ester + H2O = 6-carboxyhexanoyl-[ACP] + methanol + H(+). It participates in cofactor biosynthesis; biotin biosynthesis. The physiological role of BioH is to remove the methyl group introduced by BioC when the pimeloyl moiety is complete. It allows to synthesize pimeloyl-ACP via the fatty acid synthetic pathway through the hydrolysis of the ester bonds of pimeloyl-ACP esters. This Sodalis glossinidius (strain morsitans) protein is Pimeloyl-[acyl-carrier protein] methyl ester esterase.